The chain runs to 61 residues: Small ribosomal subunit protein uS14B (61 aa).

Positions 24, 27, 40, and 43 each coordinate Zn(2+).

Belongs to the universal ribosomal protein uS14 family. Zinc-binding uS14 subfamily. In terms of assembly, part of the 30S ribosomal subunit. Contacts proteins S3 and S10. Requires Zn(2+) as cofactor.

Binds 16S rRNA, required for the assembly of 30S particles and may also be responsible for determining the conformation of the 16S rRNA at the A site. The polypeptide is Small ribosomal subunit protein uS14B (Listeria welshimeri serovar 6b (strain ATCC 35897 / DSM 20650 / CCUG 15529 / CIP 8149 / NCTC 11857 / SLCC 5334 / V8)).